The primary structure comprises 437 residues: Phosphoglucosamine mutase (437 aa).

S101 serves as the catalytic Phosphoserine intermediate. Mg(2+) is bound by residues S101, D234, D236, and D238. The residue at position 101 (S101) is a Phosphoserine.

It belongs to the phosphohexose mutase family. Requires Mg(2+) as cofactor. Post-translationally, activated by phosphorylation.

The catalysed reaction is alpha-D-glucosamine 1-phosphate = D-glucosamine 6-phosphate. Its function is as follows. Catalyzes the conversion of glucosamine-6-phosphate to glucosamine-1-phosphate. The sequence is that of Phosphoglucosamine mutase from Thermus thermophilus (strain ATCC BAA-163 / DSM 7039 / HB27).